We begin with the raw amino-acid sequence, 397 residues long: Tauropine dehydrogenase (397 aa).

Belongs to the lysopine/nopaline/octopine/opine/vitopine dehydrogenases family.

It catalyses the reaction tauropine + NAD(+) + H2O = taurine + pyruvate + NADH + H(+). Its activity is regulated as follows. Subject to substrate inhibition by pyruvate for the reverse reaction but not for the forward reaction of the tauropine dehydrogenase activity. In terms of biological role, may play a role in maintaining a redox balance during environmental and functional hypoxia. Exhibits high specificity for taurine and in addition, requires both alpha amino group and C-2 carbon chain length as a critical factor for active site binding of the amino acid. A methyl group in the beta position may be critical for active site binding of the keto acid. In the reverse reaction requires NAD(H) for the activity but not NADP(H). The chain is Tauropine dehydrogenase from Arabella iricolor (Opal worm).